Reading from the N-terminus, the 32-residue chain is Periplasmic [NiFe] hydrogenase small subunit (32 aa).

[4Fe-4S] cluster is bound by residues C17 and C20.

The protein belongs to the [NiFe]/[NiFeSe] hydrogenase small subunit family. Heterodimer of a large and a small subunit. Requires [3Fe-4S] cluster as cofactor. [4Fe-4S] cluster is required as a cofactor.

The protein localises to the periplasm. It catalyses the reaction 2 Fe(III)-[cytochrome c3] + H2 = 2 Fe(II)-[cytochrome c3] + 2 H(+). This is Periplasmic [NiFe] hydrogenase small subunit (hydA) from Desulfovibrio multispirans.